The following is a 65-amino-acid chain: Large ribosomal subunit protein uL29 (65 aa).

This sequence belongs to the universal ribosomal protein uL29 family.

The polypeptide is Large ribosomal subunit protein uL29 (rpmC) (Xylella fastidiosa (strain 9a5c)).